The sequence spans 167 residues: Transmembrane protein 220 (167 aa).

Transmembrane regions (helical) follow at residues 10-30 (PGLW…AAVV), 40-60 (WVVV…NPLV), 69-89 (VSAI…YHFL), 104-122 (ELSG…HSSS), and 130-150 (MHLA…VYVH).

The protein localises to the membrane. The protein is Transmembrane protein 220 (Tmem220) of Mus musculus (Mouse).